We begin with the raw amino-acid sequence, 108 residues long: Pyrimidine/purine nucleoside phosphorylase (108 aa).

The protein belongs to the nucleoside phosphorylase PpnP family.

It catalyses the reaction a purine D-ribonucleoside + phosphate = a purine nucleobase + alpha-D-ribose 1-phosphate. It carries out the reaction adenosine + phosphate = alpha-D-ribose 1-phosphate + adenine. The catalysed reaction is cytidine + phosphate = cytosine + alpha-D-ribose 1-phosphate. The enzyme catalyses guanosine + phosphate = alpha-D-ribose 1-phosphate + guanine. It catalyses the reaction inosine + phosphate = alpha-D-ribose 1-phosphate + hypoxanthine. It carries out the reaction thymidine + phosphate = 2-deoxy-alpha-D-ribose 1-phosphate + thymine. The catalysed reaction is uridine + phosphate = alpha-D-ribose 1-phosphate + uracil. The enzyme catalyses xanthosine + phosphate = alpha-D-ribose 1-phosphate + xanthine. In terms of biological role, catalyzes the phosphorolysis of diverse nucleosides, yielding D-ribose 1-phosphate and the respective free bases. Can use uridine, adenosine, guanosine, cytidine, thymidine, inosine and xanthosine as substrates. Also catalyzes the reverse reactions. The protein is Pyrimidine/purine nucleoside phosphorylase of Acinetobacter baylyi (strain ATCC 33305 / BD413 / ADP1).